We begin with the raw amino-acid sequence, 418 residues long: Gamma-glutamyl phosphate reductase (418 aa).

This sequence belongs to the gamma-glutamyl phosphate reductase family.

Its subcellular location is the cytoplasm. It catalyses the reaction L-glutamate 5-semialdehyde + phosphate + NADP(+) = L-glutamyl 5-phosphate + NADPH + H(+). Its pathway is amino-acid biosynthesis; L-proline biosynthesis; L-glutamate 5-semialdehyde from L-glutamate: step 2/2. Its function is as follows. Catalyzes the NADPH-dependent reduction of L-glutamate 5-phosphate into L-glutamate 5-semialdehyde and phosphate. The product spontaneously undergoes cyclization to form 1-pyrroline-5-carboxylate. The sequence is that of Gamma-glutamyl phosphate reductase from Moorella thermoacetica (strain ATCC 39073 / JCM 9320).